We begin with the raw amino-acid sequence, 274 residues long: Diaminopimelate epimerase (274 aa).

The substrate site is built by N11, Q44, and N64. C73 serves as the catalytic Proton donor. Substrate is bound by residues 74-75, N157, N190, and 208-209; these read GN and ER. Catalysis depends on C217, which acts as the Proton acceptor. Residue 218-219 coordinates substrate; it reads GS.

It belongs to the diaminopimelate epimerase family. In terms of assembly, homodimer.

The protein resides in the cytoplasm. The catalysed reaction is (2S,6S)-2,6-diaminopimelate = meso-2,6-diaminopimelate. The protein operates within amino-acid biosynthesis; L-lysine biosynthesis via DAP pathway; DL-2,6-diaminopimelate from LL-2,6-diaminopimelate: step 1/1. Its function is as follows. Catalyzes the stereoinversion of LL-2,6-diaminopimelate (L,L-DAP) to meso-diaminopimelate (meso-DAP), a precursor of L-lysine and an essential component of the bacterial peptidoglycan. The chain is Diaminopimelate epimerase from Escherichia coli O6:H1 (strain CFT073 / ATCC 700928 / UPEC).